The primary structure comprises 203 residues: Guanylate kinase (203 aa).

One can recognise a Guanylate kinase-like domain in the interval 5–183 (GVLYILSAPS…AVEELKSVII (179 aa)). An ATP-binding site is contributed by 12–19 (APSGAGKT).

It belongs to the guanylate kinase family.

Its subcellular location is the cytoplasm. It carries out the reaction GMP + ATP = GDP + ADP. Essential for recycling GMP and indirectly, cGMP. In Geobacter sulfurreducens (strain ATCC 51573 / DSM 12127 / PCA), this protein is Guanylate kinase.